We begin with the raw amino-acid sequence, 617 residues long: Vacuolar protein sorting-associated protein 33A (617 aa).

Residues 268-287 (NFPSDGALPGGGGSGPRVEE) are disordered.

It belongs to the STXBP/unc-18/SEC1 family. Component of the class C core vacuole/endosome tethering (CORVET) complex composed of at least Vps8, dor/Vps18, car/Vps33A and Vps16A; unlike in other species, Vps11 is not part of the Drosophila complex. Due to the reduced number of components the Drosophila CORVET complex is often referred to as the miniCORVET complex. Interacts with ema. Component of the homotypic fusion and vacuole protein sorting (HOPS) complex, composed of Vps16A, car/Vps33A, dor/Vps18, Vps39, Vps11 and lt/Vps41. The tethering complex core made up of Vps16A, car/Vps33A and dor/Vps18 and shared by both HOPS and CORVET, preferentially associates with CORVET specific Vps8 over HOPS specific lt/Vps41. Interacts with Syx17 (via SNARE domain); the interaction requires Vps16A, may involve additional components of the HOPS complex and may promote assembly of the Syx17-Snap29-Vamp7 trans-SNARE complex.

The protein localises to the early endosome. It is found in the late endosome membrane. The protein resides in the lysosome membrane. Core component of the class C core vacuole/endosome tethering (CORVET) and the homotypic fusion and vacuole protein sorting (HOPS) tethering complexes involved in endo-lysosomal vesicle trafficking and lysosome biogenesis. The CORVET complex facilitates docking and fusion of endosomal vesicles during endosome maturation, acts upstream of HOPS, but is not involved in autophagic flux. The CORVET complex may cooperate with the early endosomal tether Rbsn-5 to mediate endosomal fusion. The HOPS complex facilitates docking and fusion of lysosomes with late endosomes and several other types of vesicles. The HOPS complex is also involved in autophagy and crinophagy (the elimination of unused secretory granules through their fusion with lysosomes). The HOPS complex probably instigates autophagosome-lysosome fusion by binding autophagosome associated Syx17/syntaxin 17 and promoting assembly of the trans-SNARE complex. Independent of Syx17/syntaxin 17 HOPS is involved in biosynthetic transport to lysosomes and lysosome-related organelles such as eye-pigment granules. Required for endocytic degradation of boss/bride of sevenless and N/Notch in developing ommatidia. This is Vacuolar protein sorting-associated protein 33A from Drosophila melanogaster (Fruit fly).